A 793-amino-acid polypeptide reads, in one-letter code: MRIGVYICHCGLNIAGVIDVSALEAMANELEDVVLAREVQFLCSDSGQEGIIKDIKDNKLDRVVVAACSPRLHEKTFRHVMEKAGLNPYLMEMVNIREQCSWVHADDPQMATQKAFDLIRMGVAKARFLRELSATNSKASRNVLIIGGGVAGIEAALNLAEAGFPVTMVEKESTIGGKMALMNEVFPTNDCSICVLAPKMTEVQNHPNITLYTYSEVTDISGSVGKFHVRVKRKPRFVLEDKCKGCVDLCSGVCPVEIENPMNYGIGKTRAIYMPIPQSVPQVVLIDPDHCVGCGLCQLACPAEAVDYEQKPEEIEFEAGAIIVSTGYQLFDASRKKEYGFGKYPDVITNMQLERMLNSAGPTGGRVLVPSTGEPPKSVAFIQCVGSRDKTVGNEYCSRVCCMAALKNSQMVKERYPDTDVTIHYIDIRAAGEMYEEYYTRTQEMGVDFIRGKVAEVYSGEDGRPVVRFENTLESSVEEEAHDLVVLSTGYEPTKAAEGIGRMLNLARRPDRFFASAHPKMRPVDAPVSGVFLAGCASGPKEIQVSIAQGSACASKVMQLLGTGELEADPMGAHVDPDKCIGCRTCVEVCKFGKISIENKKAVVDEVSCYGCGDCSAACPVGAIQMRNFENEQILAQVREATAHKSQCPFIVAFLCNWCSYACADLTGMSRIRYPTNIRVIRTMCSARVNPEFVLEALKGGADGVLVAGCRMDECHYIHGNFDAKKRMDILKEVIKEIGLDPKRLRTLWISAAEGERFSNTINEFVKELEEIGPIGSEFKQECAVPGVEEVTQ.

147–170 (GGGVAGIEAALNLAEAGFPVTMVE) provides a ligand contact to FAD. 4Fe-4S ferredoxin-type domains follow at residues 233–264 (RKPRFVLEDKCKGCVDLCSGVCPVEIENPMNY), 282–311 (QVVLIDPDHCVGCGLCQLACPAEAVDYEQK), 571–600 (MGAHVDPDKCIGCRTCVEVCKFGKISIENK), and 601–629 (KAVVDEVSCYGCGDCSAACPVGAIQMRNF). Residues Cys-243, Cys-246, Cys-250, Cys-254, Cys-291, Cys-294, Cys-297, Cys-301, Cys-580, Cys-583, Cys-586, Cys-590, Cys-609, Cys-612, Cys-615, and Cys-619 each coordinate [4Fe-4S] cluster.

Belongs to the HdrA family. As to quaternary structure, the ferredoxin/F(420)H(2)-dependent CoB-CoM heterodisulfide reductase is composed of three subunits; HdrA2, HdrB2 and HdrC2. It depends on [4Fe-4S] cluster as a cofactor. [2Fe-2S] cluster serves as cofactor. Requires FAD as cofactor.

It localises to the cytoplasm. The enzyme catalyses coenzyme B + coenzyme M + 2 oxidized [2Fe-2S]-[ferredoxin] = coenzyme M-coenzyme B heterodisulfide + 2 reduced [2Fe-2S]-[ferredoxin] + 2 H(+). It carries out the reaction coenzyme B + 2 oxidized coenzyme F420-(gamma-L-Glu)(n) + coenzyme M + 2 reduced [2Fe-2S]-[ferredoxin] + 4 H(+) = coenzyme M-coenzyme B heterodisulfide + 2 reduced coenzyme F420-(gamma-L-Glu)(n) + 2 oxidized [2Fe-2S]-[ferredoxin]. It participates in cofactor metabolism; coenzyme M-coenzyme B heterodisulfide reduction; coenzyme B and coenzyme M from coenzyme M-coenzyme B heterodisulfide: step 1/1. In terms of biological role, part of a complex that catalyzes the reversible reduction of CoM-S-S-CoB to the thiol-coenzymes H-S-CoM (coenzyme M) and H-S-CoB (coenzyme B). Catalyzes the transfer of electrons from ferredoxin to CoM-S-S-CoB during methanogenesis from acetate. Electrons transfer from ferredoxin to CoM-S-S-CoB via HdrA2, HdrC2 and HdrB2. In addition, the complex can use electron bifurcation to direct electron pairs from reduced coenzyme F420 towards the reduction of both ferredoxin and CoB-CoM heterodisulfide. This activity may take place during Fe(III)-dependent anaerobic methane oxidation. This Methanosarcina acetivorans (strain ATCC 35395 / DSM 2834 / JCM 12185 / C2A) protein is Ferredoxin/F(420)H(2)-dependent CoB-CoM heterodisulfide reductase subunit A.